A 119-amino-acid chain; its full sequence is Spermidine export protein MdtJ (119 aa).

Transmembrane regions (helical) follow at residues 1–21 (MIYW…TLAL), 31–51 (AGFI…SFSV), 54–74 (IALG…ITLF), and 81–101 (ETLT…ILLI).

Belongs to the drug/metabolite transporter (DMT) superfamily. Small multidrug resistance (SMR) (TC 2.A.7.1) family. MdtJ subfamily. Forms a complex with MdtI.

The protein resides in the cell inner membrane. Catalyzes the excretion of spermidine. In Cronobacter sakazakii (strain ATCC BAA-894) (Enterobacter sakazakii), this protein is Spermidine export protein MdtJ (mdtJ).